The chain runs to 163 residues: Protein US34 (163 aa).

The first 22 residues, 1-22 (MNLEQLINVLGLLVWIAARAVS), serve as a signal peptide directing secretion.

Belongs to the HHV-5 US34 protein family.

The sequence is that of Protein US34 (US34) from Homo sapiens (Human).